The sequence spans 592 residues: Aspartate--tRNA(Asp/Asn) ligase (592 aa).

Position 182 (Glu182) interacts with L-aspartate. Residues 206 to 209 (QIFK) are aspartate. Residue Arg228 participates in L-aspartate binding. ATP is bound by residues 228 to 230 (RDE) and Gln237. Position 455 (His455) interacts with L-aspartate. Position 489 (Glu489) interacts with ATP. Arg496 is an L-aspartate binding site. 541 to 544 (GLDR) is a binding site for ATP.

This sequence belongs to the class-II aminoacyl-tRNA synthetase family. Type 1 subfamily. Homodimer.

It is found in the cytoplasm. The catalysed reaction is tRNA(Asx) + L-aspartate + ATP = L-aspartyl-tRNA(Asx) + AMP + diphosphate. Aspartyl-tRNA synthetase with relaxed tRNA specificity since it is able to aspartylate not only its cognate tRNA(Asp) but also tRNA(Asn). Reaction proceeds in two steps: L-aspartate is first activated by ATP to form Asp-AMP and then transferred to the acceptor end of tRNA(Asp/Asn). In Thermoanaerobacter sp. (strain X514), this protein is Aspartate--tRNA(Asp/Asn) ligase.